A 302-amino-acid chain; its full sequence is Methionyl-tRNA formyltransferase (302 aa).

108–111 (SLLP) contributes to the (6S)-5,6,7,8-tetrahydrofolate binding site.

The protein belongs to the Fmt family.

It catalyses the reaction L-methionyl-tRNA(fMet) + (6R)-10-formyltetrahydrofolate = N-formyl-L-methionyl-tRNA(fMet) + (6S)-5,6,7,8-tetrahydrofolate + H(+). Functionally, attaches a formyl group to the free amino group of methionyl-tRNA(fMet). The formyl group appears to play a dual role in the initiator identity of N-formylmethionyl-tRNA by promoting its recognition by IF2 and preventing the misappropriation of this tRNA by the elongation apparatus. The sequence is that of Methionyl-tRNA formyltransferase from Cereibacter sphaeroides (strain ATCC 17025 / ATH 2.4.3) (Rhodobacter sphaeroides).